We begin with the raw amino-acid sequence, 380 residues long: Chaperone protein DnaJ (380 aa).

Positions 5-70 constitute a J domain; it reads DYYEVLGVER…SKRAAYDQYG (66 aa). The CR-type zinc-finger motif lies at 139–217; it reads GTNVNIRVPT…CHGEGRVEES (79 aa). Residues cysteine 152, cysteine 155, cysteine 169, cysteine 172, cysteine 191, cysteine 194, cysteine 205, and cysteine 208 each contribute to the Zn(2+) site. 4 CXXCXGXG motif repeats span residues 152–159, 169–176, 191–198, and 205–212; these read CKPCDGSG, CPTCGGIG, CPRCHGHG, and CDSCHGEG. Positions 224 to 245 are disordered; the sequence is VPPGVDTGDRIRLSGEGEAGTQ.

This sequence belongs to the DnaJ family. Homodimer. Zn(2+) serves as cofactor.

It is found in the cytoplasm. In terms of biological role, participates actively in the response to hyperosmotic and heat shock by preventing the aggregation of stress-denatured proteins and by disaggregating proteins, also in an autonomous, DnaK-independent fashion. Unfolded proteins bind initially to DnaJ; upon interaction with the DnaJ-bound protein, DnaK hydrolyzes its bound ATP, resulting in the formation of a stable complex. GrpE releases ADP from DnaK; ATP binding to DnaK triggers the release of the substrate protein, thus completing the reaction cycle. Several rounds of ATP-dependent interactions between DnaJ, DnaK and GrpE are required for fully efficient folding. Also involved, together with DnaK and GrpE, in the DNA replication of plasmids through activation of initiation proteins. In Pseudomonas syringae pv. syringae (strain B728a), this protein is Chaperone protein DnaJ.